The sequence spans 125 residues: Small ribosomal subunit protein uS12 (125 aa).

The interval 9 to 31 (RQGREVEKIKSKSPAMENSPQRR) is disordered. Asp89 is modified (3-methylthioaspartic acid). The tract at residues 106-125 (GVKDRKQSRSKYGAKRPKKA) is disordered. Basic residues predominate over residues 113–125 (SRSKYGAKRPKKA).

This sequence belongs to the universal ribosomal protein uS12 family. As to quaternary structure, part of the 30S ribosomal subunit. Contacts proteins S8 and S17. May interact with IF1 in the 30S initiation complex.

With S4 and S5 plays an important role in translational accuracy. In terms of biological role, interacts with and stabilizes bases of the 16S rRNA that are involved in tRNA selection in the A site and with the mRNA backbone. Located at the interface of the 30S and 50S subunits, it traverses the body of the 30S subunit contacting proteins on the other side and probably holding the rRNA structure together. The combined cluster of proteins S8, S12 and S17 appears to hold together the shoulder and platform of the 30S subunit. The protein is Small ribosomal subunit protein uS12 of Polaromonas sp. (strain JS666 / ATCC BAA-500).